We begin with the raw amino-acid sequence, 149 residues long: Arginine repressor (149 aa).

It belongs to the ArgR family.

It is found in the cytoplasm. The protein operates within amino-acid biosynthesis; L-arginine biosynthesis [regulation]. Its function is as follows. Regulates arginine biosynthesis genes. This chain is Arginine repressor, found in Bacillus velezensis (strain DSM 23117 / BGSC 10A6 / LMG 26770 / FZB42) (Bacillus amyloliquefaciens subsp. plantarum).